A 419-amino-acid polypeptide reads, in one-letter code: MAQEVIKIRGGRTLNGEVNISGAKNSAVAIIPATLLAQGHVKLEGLPQISDVKTLVSLLEDLNIKASLNGTELEVDTTEIQNAALPNNKVESLRASYYMMGAMLGRFKKCVIGLPGGCPLGPRPIDQHIKGFKALGAEIDESSTTSMKIEAKELKGAHIFLDMVSVGATINIMLAAVYATGQTVIENAAKEPEVVDVANFLTSMGANIKGAGTSTIKINGVKELHGSEYQVIPDRIEAGTYMCIAAACGENVILNNIVPKHVETLTAKFSELGVNVDVRDERIRINNNAPYQFVDIKTLVYPGFATDLQQPITPLLFMANGPSFVTDTIYPERFKHVEELKRMGANIEVDEGTATIKPSTLHGAEVYASDLRAGACLIIAGLIAEGVTTIYNVKHIYRGYTDIVEHLKALGADIWTETV.

A phosphoenolpyruvate-binding site is contributed by Lys-24–Asn-25. Residue Arg-94 participates in UDP-N-acetyl-alpha-D-glucosamine binding. The Proton donor role is filled by Cys-118. Cys-118 is subject to 2-(S-cysteinyl)pyruvic acid O-phosphothioketal. Residues Arg-123–Gln-127, Asp-307, and Ile-329 each bind UDP-N-acetyl-alpha-D-glucosamine.

Belongs to the EPSP synthase family. MurA subfamily.

Its subcellular location is the cytoplasm. It carries out the reaction phosphoenolpyruvate + UDP-N-acetyl-alpha-D-glucosamine = UDP-N-acetyl-3-O-(1-carboxyvinyl)-alpha-D-glucosamine + phosphate. It participates in cell wall biogenesis; peptidoglycan biosynthesis. Its function is as follows. Cell wall formation. Adds enolpyruvyl to UDP-N-acetylglucosamine. This chain is UDP-N-acetylglucosamine 1-carboxyvinyltransferase 2, found in Staphylococcus aureus (strain bovine RF122 / ET3-1).